The chain runs to 411 residues: MAYLVWGKGRSGLAAFNLLKAKGFKAYIGDDKEDKNLWQDVWNEIDTVVLSPGIPPFHPLWKEAIKSSKEVIGETELAYRFYKGKNIIAVTGTDGKSTTVHLIHHFTSFKEGGNFGTPFSEIVLDNDKENVALEASSFQGKTLDTFRPNVGVFLNFSKDHLDWHPSLEDYLLSKQKIFKNQTQEDILILNAQKPVCDTPSLAKKIFFGENGDLKVVGSDVYYKDELLIENISHPSLKGLHNLYNIAVASFVAFSMGISLEEIKKNLETFEALPFRYQYLGNFEGIDICNDSKSTTVNALMSALESTKAPILLIAGGIDKGGDFSSIEAYKDKIKAVFLYGKDKNLIKDQIEHFLKVYVLEDLESALLKVKEQARKGDTILFSPACASFDMFESYKHRGEVFNELVKKHFNS.

92–98 (GTDGKST) contacts ATP.

This sequence belongs to the MurCDEF family.

Its subcellular location is the cytoplasm. The catalysed reaction is UDP-N-acetyl-alpha-D-muramoyl-L-alanine + D-glutamate + ATP = UDP-N-acetyl-alpha-D-muramoyl-L-alanyl-D-glutamate + ADP + phosphate + H(+). The protein operates within cell wall biogenesis; peptidoglycan biosynthesis. Functionally, cell wall formation. Catalyzes the addition of glutamate to the nucleotide precursor UDP-N-acetylmuramoyl-L-alanine (UMA). The chain is UDP-N-acetylmuramoylalanine--D-glutamate ligase from Hydrogenobaculum sp. (strain Y04AAS1).